The following is a 164-amino-acid chain: ATP synthase subunit b (164 aa).

The helical transmembrane segment at S10–F32 threads the bilayer.

This sequence belongs to the ATPase B chain family. In terms of assembly, F-type ATPases have 2 components, F(1) - the catalytic core - and F(0) - the membrane proton channel. F(1) has five subunits: alpha(3), beta(3), gamma(1), delta(1), epsilon(1). F(0) has three main subunits: a(1), b(2) and c(10-14). The alpha and beta chains form an alternating ring which encloses part of the gamma chain. F(1) is attached to F(0) by a central stalk formed by the gamma and epsilon chains, while a peripheral stalk is formed by the delta and b chains.

Its subcellular location is the cell inner membrane. F(1)F(0) ATP synthase produces ATP from ADP in the presence of a proton or sodium gradient. F-type ATPases consist of two structural domains, F(1) containing the extramembraneous catalytic core and F(0) containing the membrane proton channel, linked together by a central stalk and a peripheral stalk. During catalysis, ATP synthesis in the catalytic domain of F(1) is coupled via a rotary mechanism of the central stalk subunits to proton translocation. Its function is as follows. Component of the F(0) channel, it forms part of the peripheral stalk, linking F(1) to F(0). This Thermotoga maritima (strain ATCC 43589 / DSM 3109 / JCM 10099 / NBRC 100826 / MSB8) protein is ATP synthase subunit b.